Here is a 446-residue protein sequence, read N- to C-terminus: NADH-quinone oxidoreductase subunit D (446 aa).

This sequence belongs to the complex I 49 kDa subunit family. In terms of assembly, NDH-1 is composed of 14 different subunits. Subunits NuoB, C, D, E, F, and G constitute the peripheral sector of the complex.

The protein resides in the cell membrane. The enzyme catalyses a quinone + NADH + 5 H(+)(in) = a quinol + NAD(+) + 4 H(+)(out). Functionally, NDH-1 shuttles electrons from NADH, via FMN and iron-sulfur (Fe-S) centers, to quinones in the respiratory chain. The immediate electron acceptor for the enzyme in this species is believed to be a menaquinone. Couples the redox reaction to proton translocation (for every two electrons transferred, four hydrogen ions are translocated across the cytoplasmic membrane), and thus conserves the redox energy in a proton gradient. The polypeptide is NADH-quinone oxidoreductase subunit D (Nocardioides sp. (strain ATCC BAA-499 / JS614)).